Consider the following 138-residue polypeptide: MKPAARRRARECAVQALYSWQLSKNDIADVELQFLSEQDVKDVDIAYFRELLSGVAVNAASLDALMAPVLSRQLEELGQVERAVLRIALFELSKRDDVPYKVAINEAIELAKTFGAADSHKFVNGVLDKVAPTVRKRK.

Belongs to the NusB family.

In terms of biological role, involved in transcription antitermination. Required for transcription of ribosomal RNA (rRNA) genes. Binds specifically to the boxA antiterminator sequence of the ribosomal RNA (rrn) operons. The sequence is that of Transcription antitermination protein NusB from Yersinia enterocolitica serotype O:8 / biotype 1B (strain NCTC 13174 / 8081).